The chain runs to 463 residues: Pentatricopeptide repeat-containing protein At2g17670 (463 aa).

Residues M1–P63 are disordered. PPR repeat units follow at residues G121–P157, D158–P192, D193–D223, D229–P263, D264–P298, D299–P333, D334–P368, N369–L403, and E404–S438.

The protein belongs to the PPR family. P subfamily.

The protein is Pentatricopeptide repeat-containing protein At2g17670 of Arabidopsis thaliana (Mouse-ear cress).